Here is a 121-residue protein sequence, read N- to C-terminus: Large ribosomal subunit protein uL18 (121 aa).

Belongs to the universal ribosomal protein uL18 family. As to quaternary structure, part of the 50S ribosomal subunit; part of the 5S rRNA/L5/L18/L25 subcomplex. Contacts the 5S and 23S rRNAs.

This is one of the proteins that bind and probably mediate the attachment of the 5S RNA into the large ribosomal subunit, where it forms part of the central protuberance. The sequence is that of Large ribosomal subunit protein uL18 from Mesomycoplasma hyopneumoniae (strain 232) (Mycoplasma hyopneumoniae).